A 296-amino-acid polypeptide reads, in one-letter code: Maltose/maltodextrin transport system permease protein MalG (296 aa).

The Cytoplasmic segment spans residues 1-12; sequence MAMVQPKSQKAR. A helical transmembrane segment spans residues 13 to 35; the sequence is LFITHLLLLLFIAAIMFPLLMVV. The Periplasmic segment spans residues 36-88; the sequence is AISLRQGNFATGSLIPEQISWDHWKLALGFSVEQADGRITPPPFPVLLWLWNS. The region spanning 85 to 281 is the ABC transmembrane type-1 domain; that stretch reads LWNSVKVAGI…LPITIVFLLA (197 aa). Residues 89-111 traverse the membrane as a helical segment; it reads VKVAGISAIGIVALSTTCAYAFA. The Cytoplasmic portion of the chain corresponds to 112–123; it reads RMRFPGKATLLK. A helical transmembrane segment spans residues 124–143; that stretch reads GMLIFQMFPAVLSLVALYAL. Over 144–152 the chain is Periplasmic; the sequence is FDRLGEYIP. A helical membrane pass occupies residues 153-175; sequence FIGLNTHGGVIFAYLGGIALHVW. Residues 176–204 are Cytoplasmic-facing; the sequence is TIKGYFETIDSSLEEAAALDGATPWQAFR. The chain crosses the membrane as a helical span at residues 205–227; the sequence is LVLLPLSVPILAVVFILSFIAAI. Over 228–257 the chain is Periplasmic; that stretch reads TEVPVASLLLRDVNSYTLAVGMQQYLNPQN. The chain crosses the membrane as a helical span at residues 258–280; that stretch reads YLWGDFAAAAVMSALPITIVFLL. At 281–296 the chain is on the cytoplasmic side; sequence AQRWLVNGLTAGGVKG.

The protein belongs to the binding-protein-dependent transport system permease family. MalFG subfamily. The complex is composed of two ATP-binding proteins (MalK), two transmembrane proteins (MalG and MalF) and a solute-binding protein (MalE).

Its subcellular location is the cell inner membrane. Part of the ABC transporter complex MalEFGK involved in maltose/maltodextrin import. Probably responsible for the translocation of the substrate across the membrane. The protein is Maltose/maltodextrin transport system permease protein MalG (malG) of Escherichia coli O157:H7.